The chain runs to 236 residues: 4-aminobenzoate synthase (236 aa).

6 residues coordinate Fe(2+): glutamate 87, histidine 94, glutamate 148, histidine 180, aspartate 184, and histidine 187.

Belongs to the CADD family. As to quaternary structure, homodimer. Fe(2+) serves as cofactor. Mn(2+) is required as a cofactor.

In terms of biological role, involved in de novo para-aminobenzoate (PABA) biosynthesis. Acts as a self-sacrificing or 'suicide' enzyme that utilizes its own active site tyrosine residue(s) as the substrate for PABA synthesis. The side chain of the tyrosine residue is released from the protein backbone via cleavage of the C(alpha)-C(beta) bond, leaving a glycine in place of the original tyrosine residue. Reaction requires O(2) and a reduced dimetal cofactor. The polypeptide is 4-aminobenzoate synthase (Chlamydia muridarum (strain MoPn / Nigg)).